The chain runs to 61 residues: DNA-binding protein 7a (61 aa).

The tract at residues 37-61 (NGKTGRGAVSEKDAPKELLEKLEKK) is disordered. Positions 45–61 (VSEKDAPKELLEKLEKK) are enriched in basic and acidic residues.

This sequence belongs to the 7 kDa DNA-binding/endoribonuclease P2 family. As to quaternary structure, monomer.

It is found in the cytoplasm. Its function is as follows. Can constrain negative DNA supercoils. May be involved in maintaining the integrity of the genome at high temperature. This is DNA-binding protein 7a from Acidianus hospitalis (strain W1).